A 573-amino-acid polypeptide reads, in one-letter code: Sulfite reductase [NADPH] hemoprotein beta-component (573 aa).

[4Fe-4S] cluster-binding residues include cysteine 438, cysteine 444, cysteine 483, and cysteine 487. A siroheme-binding site is contributed by cysteine 487.

This sequence belongs to the nitrite and sulfite reductase 4Fe-4S domain family. As to quaternary structure, alpha(8)-beta(8). The alpha component is a flavoprotein, the beta component is a hemoprotein. Siroheme serves as cofactor. Requires [4Fe-4S] cluster as cofactor.

It catalyses the reaction hydrogen sulfide + 3 NADP(+) + 3 H2O = sulfite + 3 NADPH + 4 H(+). Its pathway is sulfur metabolism; hydrogen sulfide biosynthesis; hydrogen sulfide from sulfite (NADPH route): step 1/1. In terms of biological role, component of the sulfite reductase complex that catalyzes the 6-electron reduction of sulfite to sulfide. This is one of several activities required for the biosynthesis of L-cysteine from sulfate. The sequence is that of Sulfite reductase [NADPH] hemoprotein beta-component from Geobacillus thermodenitrificans (strain NG80-2).